Reading from the N-terminus, the 214-residue chain is Adenylate kinase (214 aa).

10–15 contributes to the ATP binding site; the sequence is GAGKGT. An NMP region spans residues 30–59; that stretch reads STGDMFREAVASKSELGKKVEEILKRGDLV. AMP is bound by residues Thr-31, Arg-36, 57 to 59, 85 to 88, and Gln-92; these read DLV and GFPR. An LID region spans residues 126–163; it reads NRRICSNCGKIYNLITLPPKVDGKCDVCGGTLYQREDD. Arg-127 is an ATP binding site. Cys-130 and Cys-133 together coordinate Zn(2+). Residue 136–137 coordinates ATP; the sequence is IY. The Zn(2+) site is built by Cys-150 and Cys-153. Residues Arg-160 and Arg-171 each coordinate AMP. Leu-199 serves as a coordination point for ATP.

Belongs to the adenylate kinase family. In terms of assembly, monomer.

It localises to the cytoplasm. The enzyme catalyses AMP + ATP = 2 ADP. It functions in the pathway purine metabolism; AMP biosynthesis via salvage pathway; AMP from ADP: step 1/1. Functionally, catalyzes the reversible transfer of the terminal phosphate group between ATP and AMP. Plays an important role in cellular energy homeostasis and in adenine nucleotide metabolism. The sequence is that of Adenylate kinase from Thermosipho africanus (strain TCF52B).